A 381-amino-acid polypeptide reads, in one-letter code: Hydrogenase nickel incorporation protein HupN (381 aa).

The Cytoplasmic segment spans residues 1 to 39; it reads MLPFSMTGLEKDHTRGVLILANAHRRSERSRTASCAGPA. A helical membrane pass occupies residues 40-60; sequence VLFGGLITANIVAWAWAFALF. Residues 61-63 lie on the Periplasmic side of the membrane; it reads ADR. A helical transmembrane segment spans residues 64–84; that stretch reads PVVMATALLAWVFGLRHAVDA. The Cytoplasmic portion of the chain corresponds to 85–110; it reads DHIAAIDNVVRSLMQTGGTPRSAGLY. The helical transmembrane segment at 111-131 threads the bilayer; that stretch reads FALGHSSVVVVATMLLALGVV. The Periplasmic segment spans residues 132-149; it reads SLGGDGLLKEIGSFIGAS. The chain crosses the membrane as a helical span at residues 150-170; that stretch reads VSALFLLVIAAINLAIFASLW. Over 171–215 the chain is Cytoplasmic; that stretch reads RTFRKAREQGIRDAAGLDALLAHRGILVRLLGPMFRLVTKPWHMY. A helical membrane pass occupies residues 216 to 236; that stretch reads PLGFLFGLGFDTATEIGLLSI. At 237–243 the chain is on the periplasmic side; the sequence is SASEAAR. Residues 244-264 traverse the membrane as a helical segment; that stretch reads GASLADVMVFPALFAAGMALV. Residues 265-292 are Cytoplasmic-facing; the sequence is DTADSTLMVSAYRWAFVDPMRKLWYNLT. The helical transmembrane segment at 293–313 threads the bilayer; sequence ITGASVAVALFIGGIEALGLI. Residues 314-333 lie on the Periplasmic side of the membrane; sequence GNRLDLSGGVWTLIDALNES. A helical membrane pass occupies residues 334–354; the sequence is LANVGLAVIALFAIAWLLSIV. At 355-381 the chain is on the cytoplasmic side; it reads LYRRLIAGSSGLADTEVLECADATEAV.

The protein belongs to the NiCoT transporter (TC 2.A.52) family.

It localises to the cell inner membrane. Involved in nickel incorporation/metabolism into the hydrogenase apoprotein. The chain is Hydrogenase nickel incorporation protein HupN (hupN) from Bradyrhizobium diazoefficiens (strain JCM 10833 / BCRC 13528 / IAM 13628 / NBRC 14792 / USDA 110).